The primary structure comprises 180 residues: Centromere protein M (180 aa).

Component of the CENPA-NAC complex, at least composed of CENPA, CENPC, CENPH, CENPM, CENPN, CENPT and CENPU. The CENPA-NAC complex interacts with the CENPA-CAD complex, composed of CENPI, CENPK, CENPL, CENPO, CENPP, CENPQ, CENPR and CENPS.

Its subcellular location is the nucleus. It is found in the cytoplasm. The protein localises to the chromosome. It localises to the centromere. The protein resides in the kinetochore. Its function is as follows. Component of the CENPA-NAC (nucleosome-associated) complex, a complex that plays a central role in assembly of kinetochore proteins, mitotic progression and chromosome segregation. The CENPA-NAC complex recruits the CENPA-CAD (nucleosome distal) complex and may be involved in incorporation of newly synthesized CENPA into centromeres. The protein is Centromere protein M (CENPM) of Bos taurus (Bovine).